A 195-amino-acid chain; its full sequence is Xanthine phosphoribosyltransferase (195 aa).

2 residues coordinate xanthine: L20 and N27. Position 128–132 (128–132) interacts with 5-phospho-alpha-D-ribose 1-diphosphate; that stretch reads ANGQA. A xanthine-binding site is contributed by K156.

Belongs to the purine/pyrimidine phosphoribosyltransferase family. Xpt subfamily. Homodimer.

The protein localises to the cytoplasm. It carries out the reaction XMP + diphosphate = xanthine + 5-phospho-alpha-D-ribose 1-diphosphate. Its pathway is purine metabolism; XMP biosynthesis via salvage pathway; XMP from xanthine: step 1/1. In terms of biological role, converts the preformed base xanthine, a product of nucleic acid breakdown, to xanthosine 5'-monophosphate (XMP), so it can be reused for RNA or DNA synthesis. In Latilactobacillus sakei subsp. sakei (strain 23K) (Lactobacillus sakei subsp. sakei), this protein is Xanthine phosphoribosyltransferase.